The primary structure comprises 60 residues: Large ribosomal subunit protein uL30 (60 aa).

Belongs to the universal ribosomal protein uL30 family. As to quaternary structure, part of the 50S ribosomal subunit.

In Saccharopolyspora erythraea (strain ATCC 11635 / DSM 40517 / JCM 4748 / NBRC 13426 / NCIMB 8594 / NRRL 2338), this protein is Large ribosomal subunit protein uL30.